We begin with the raw amino-acid sequence, 680 residues long: Methionine--tRNA ligase (680 aa).

Positions 15–25 (PYANGSIHLGH) match the 'HIGH' region motif. The Zn(2+) site is built by cysteine 146, cysteine 149, cysteine 159, and cysteine 162. Positions 332 to 336 (KMSKS) match the 'KMSKS' region motif. Lysine 335 is an ATP binding site. The tRNA-binding domain maps to 579–680 (DFAKVDMRIA…EGAQPGMRVM (102 aa)).

This sequence belongs to the class-I aminoacyl-tRNA synthetase family. MetG type 1 subfamily. In terms of assembly, homodimer. The cofactor is Zn(2+).

The protein localises to the cytoplasm. The catalysed reaction is tRNA(Met) + L-methionine + ATP = L-methionyl-tRNA(Met) + AMP + diphosphate. In terms of biological role, is required not only for elongation of protein synthesis but also for the initiation of all mRNA translation through initiator tRNA(fMet) aminoacylation. This chain is Methionine--tRNA ligase, found in Photobacterium profundum (strain SS9).